A 194-amino-acid polypeptide reads, in one-letter code: Peptidyl-tRNA hydrolase (194 aa).

Position 16 (Tyr-16) interacts with tRNA. The active-site Proton acceptor is His-21. Residues Phe-67, Asn-69, and Asn-115 each coordinate tRNA.

This sequence belongs to the PTH family. Monomer.

It localises to the cytoplasm. It catalyses the reaction an N-acyl-L-alpha-aminoacyl-tRNA + H2O = an N-acyl-L-amino acid + a tRNA + H(+). In terms of biological role, hydrolyzes ribosome-free peptidyl-tRNAs (with 1 or more amino acids incorporated), which drop off the ribosome during protein synthesis, or as a result of ribosome stalling. Catalyzes the release of premature peptidyl moieties from peptidyl-tRNA molecules trapped in stalled 50S ribosomal subunits, and thus maintains levels of free tRNAs and 50S ribosomes. This is Peptidyl-tRNA hydrolase from Shigella flexneri.